Reading from the N-terminus, the 633-residue chain is 1-deoxy-D-xylulose-5-phosphate synthase (633 aa).

Residues His72 and Gly113–Ser115 each bind thiamine diphosphate. Asp144 lines the Mg(2+) pocket. Thiamine diphosphate-binding positions include Gly145–Ala146, Asn173, Tyr284, and Glu367. Asn173 provides a ligand contact to Mg(2+).

The protein belongs to the transketolase family. DXPS subfamily. As to quaternary structure, homodimer. The cofactor is Mg(2+). Thiamine diphosphate is required as a cofactor.

It catalyses the reaction D-glyceraldehyde 3-phosphate + pyruvate + H(+) = 1-deoxy-D-xylulose 5-phosphate + CO2. It functions in the pathway metabolic intermediate biosynthesis; 1-deoxy-D-xylulose 5-phosphate biosynthesis; 1-deoxy-D-xylulose 5-phosphate from D-glyceraldehyde 3-phosphate and pyruvate: step 1/1. Catalyzes the acyloin condensation reaction between C atoms 2 and 3 of pyruvate and glyceraldehyde 3-phosphate to yield 1-deoxy-D-xylulose-5-phosphate (DXP). The protein is 1-deoxy-D-xylulose-5-phosphate synthase of Lysinibacillus sphaericus (strain C3-41).